Consider the following 402-residue polypeptide: GTPase Obg (402 aa).

The Obg domain occupies 1-159; it reads MRFIDEAIVT…KELKFELKVV (159 aa). The OBG-type G domain occupies 160–334; sequence ADVGLIGLPN…VKYHLMNEIE (175 aa). GTP-binding positions include 166 to 173, 191 to 195, 213 to 216, 283 to 286, and 315 to 317; these read GLPNAGKS, FTTLV, DIPG, NKID, and STL. Residues serine 173 and threonine 193 each contribute to the Mg(2+) site. The segment at 382–402 is disordered; it reads AAFNNELDDDDDDGVEVVYAP. Acidic residues predominate over residues 387 to 396; sequence ELDDDDDDGV.

Belongs to the TRAFAC class OBG-HflX-like GTPase superfamily. OBG GTPase family. As to quaternary structure, monomer. Mg(2+) serves as cofactor.

It is found in the cytoplasm. An essential GTPase which binds GTP, GDP and possibly (p)ppGpp with moderate affinity, with high nucleotide exchange rates and a fairly low GTP hydrolysis rate. Plays a role in control of the cell cycle, stress response, ribosome biogenesis and in those bacteria that undergo differentiation, in morphogenesis control. The protein is GTPase Obg of Psychrobacter sp. (strain PRwf-1).